The sequence spans 289 residues: Tumor necrosis factor receptor superfamily member 5 (289 aa).

A signal peptide spans 1–19 (MVSLPRLCALWGCLLTAVH). At 20-193 (LGQCVTCSDK…VICGLKSRMR (174 aa)) the chain is on the extracellular side. TNFR-Cys repeat units lie at residues 25 to 60 (TCSD…TQCH), 61 to 103 (PCDS…DTVC), 104 to 144 (TCKE…TVCH), and 145 to 187 (PCPV…VICG). 8 disulfides stabilise this stretch: Cys26/Cys37, Cys38/Cys51, Cys41/Cys59, Cys62/Cys77, Cys83/Cys103, Cys105/Cys119, Cys111/Cys116, and Cys125/Cys143. Residue Asn153 is glycosylated (N-linked (GlcNAc...) asparagine). The chain crosses the membrane as a helical span at residues 194-215 (ALLVIPVVMGILITIFGVFLYI). At 216–289 (KKVVKKPKDN…TDSIALRPLV (74 aa)) the chain is on the cytoplasmic side. The tract at residues 228–251 (LPPAARRQDPQEMEDYPGHNTAAP) is disordered.

In terms of assembly, monomer and homodimer. Interacts with TRAF1, TRAF2 and TRAF6. Interacts with TRAF3 and TRAF5. Interacts with TRAF6 and MAP3K8; the interaction is required for ERK activation.

It is found in the cell membrane. Its subcellular location is the secreted. In terms of biological role, receptor for TNFSF5/CD40LG. Transduces TRAF6- and MAP3K8-mediated signals that activate ERK in macrophages and B cells, leading to induction of immunoglobulin secretion. This Mus musculus (Mouse) protein is Tumor necrosis factor receptor superfamily member 5 (Cd40).